We begin with the raw amino-acid sequence, 359 residues long: Peptide chain release factor 1 (359 aa).

Gln235 bears the N5-methylglutamine mark.

This sequence belongs to the prokaryotic/mitochondrial release factor family. Methylated by PrmC. Methylation increases the termination efficiency of RF1.

Its subcellular location is the cytoplasm. Its function is as follows. Peptide chain release factor 1 directs the termination of translation in response to the peptide chain termination codons UAG and UAA. This chain is Peptide chain release factor 1, found in Chelativorans sp. (strain BNC1).